Reading from the N-terminus, the 778-residue chain is Gelsolin (778 aa).

The N-terminal stretch at 1-23 is a signal peptide; it reads MGKQGFGYIFLTIFCTMALKLNC. Residues 49 to 172 are actin-severing; the sequence is MVEHAEFSKA…YKAGGVASGF (124 aa). The stretch at 72-154 is one Gelsolin-like 1 repeat; the sequence is FDLVPVPKNL…VQGHESSTFL (83 aa). Ca(2+) contacts are provided by Gly88, Asp89, Glu120, Asp132, Gly137, and Ala139. The interval 119-122 is actin-actin interfilament contact point; it reads DERG. Position 158–165 (158–165) interacts with a 1,2-diacyl-sn-glycero-3-phospho-(1D-myo-inositol-4,5-bisphosphate); it reads KSGIKYKA. Residue Val168 coordinates Ca(2+). 184-192 serves as a coordination point for a 1,2-diacyl-sn-glycero-3-phospho-(1D-myo-inositol-4,5-bisphosphate); sequence RLLQVKGRR. The stretch at 193–266 is one Gelsolin-like 2 repeat; that stretch reads TVRATEVPVS…SEEGAEREEM (74 aa). Positions 209 and 210 each coordinate Ca(2+). A disulfide bond links Cys211 and Cys224. Ca(2+) contacts are provided by Glu232, Asp282, Glu325, Asp326, Glu350, Gly467, Asp468, Glu498, Asp510, Gly515, Pro517, Thr547, Asn587, Asp588, Glu610, Asp692, Asp693, and Glu715. 2 Gelsolin-like repeats span residues 313 to 385 and 451 to 532; these read DENP…TPLF and SEKV…PHLM. The segment at 430 to 778 is actin-binding, Ca-sensitive; sequence AAQHGMEDDG…LQRAMADVDV (349 aa). Gelsolin-like repeat units lie at residues 574 to 638 and 677 to 752; these read AVEL…DNFW and IEEV…PPTF.

This sequence belongs to the villin/gelsolin family. Binds to actin and to fibronectin. As to expression, highly expressed in homogene cells of the basilar papilla. Also detected in subcutaneous layer of the skin.

Its subcellular location is the secreted. The protein localises to the cytoplasm. The protein resides in the cytoskeleton. Functionally, calcium-regulated, actin-modulating protein that binds to the plus (or barbed) ends of actin monomers or filaments, preventing monomer exchange (end-blocking or capping). It can promote the assembly of monomers into filaments (nucleation) as well as sever filaments already formed. Plays a role in ciliogenesis. This chain is Gelsolin (GSN), found in Gallus gallus (Chicken).